The following is a 119-amino-acid chain: Beta-2-microglobulin (119 aa).

The N-terminal stretch at 1-20 is a signal peptide; it reads MARTVATFFLMLVSLACLDA. The region spanning 25 to 114 is the Ig-like C1-type domain; it reads PQVQVYTRHP…VTLKEPKVVT (90 aa). A disulfide bridge connects residues cysteine 45 and cysteine 100.

The protein belongs to the beta-2-microglobulin family. In terms of assembly, heterodimer of an alpha chain and a beta chain. Beta-2-microglobulin is the beta-chain of major histocompatibility complex class I molecules.

It localises to the secreted. Its function is as follows. Component of the class I major histocompatibility complex (MHC). Involved in the presentation of peptide antigens to the immune system. This chain is Beta-2-microglobulin (B2M), found in Sigmodon hispidus (Hispid cotton rat).